The following is a 357-amino-acid chain: Histidinol-phosphate aminotransferase (357 aa).

The residue at position 218 (Lys218) is an N6-(pyridoxal phosphate)lysine.

This sequence belongs to the class-II pyridoxal-phosphate-dependent aminotransferase family. Histidinol-phosphate aminotransferase subfamily. In terms of assembly, homodimer. Pyridoxal 5'-phosphate is required as a cofactor.

It carries out the reaction L-histidinol phosphate + 2-oxoglutarate = 3-(imidazol-4-yl)-2-oxopropyl phosphate + L-glutamate. It participates in amino-acid biosynthesis; L-histidine biosynthesis; L-histidine from 5-phospho-alpha-D-ribose 1-diphosphate: step 7/9. This Chlorobium luteolum (strain DSM 273 / BCRC 81028 / 2530) (Pelodictyon luteolum) protein is Histidinol-phosphate aminotransferase.